Here is a 141-residue protein sequence, read N- to C-terminus: Nucleoside diphosphate kinase (141 aa).

The ATP site is built by K11, F59, R87, T93, R104, and N114. The active-site Pros-phosphohistidine intermediate is H117.

The protein belongs to the NDK family. As to quaternary structure, homotetramer. Requires Mg(2+) as cofactor.

It is found in the cytoplasm. The catalysed reaction is a 2'-deoxyribonucleoside 5'-diphosphate + ATP = a 2'-deoxyribonucleoside 5'-triphosphate + ADP. It catalyses the reaction a ribonucleoside 5'-diphosphate + ATP = a ribonucleoside 5'-triphosphate + ADP. Its function is as follows. Major role in the synthesis of nucleoside triphosphates other than ATP. The ATP gamma phosphate is transferred to the NDP beta phosphate via a ping-pong mechanism, using a phosphorylated active-site intermediate. The polypeptide is Nucleoside diphosphate kinase (Cellvibrio japonicus (strain Ueda107) (Pseudomonas fluorescens subsp. cellulosa)).